Reading from the N-terminus, the 869-residue chain is Iron-sulfur cluster assembly SufBD family protein ML0593 (869 aa).

One can recognise a DOD-type homing endonuclease domain in the interval 344-477 (LLGLWLGDGH…VRQLAIGCGL (134 aa)).

The protein belongs to the iron-sulfur cluster assembly SufBD family. This protein undergoes a protein self splicing that involves a post-translational excision of the intervening region (intein) followed by peptide ligation.

This Mycobacterium leprae (strain TN) protein is Iron-sulfur cluster assembly SufBD family protein ML0593.